Here is a 272-residue protein sequence, read N- to C-terminus: Shikimate dehydrogenase (NADP(+)) (272 aa).

Residues 14–16 (SKS) and T61 contribute to the shikimate site. The Proton acceptor role is filled by K65. Residue E77 participates in NADP(+) binding. 2 residues coordinate shikimate: N86 and D102. Residues 126–130 (GAGGA), 149–154 (NRTVSR), and M213 contribute to the NADP(+) site. Y215 is a shikimate binding site. G237 is a binding site for NADP(+).

The protein belongs to the shikimate dehydrogenase family. As to quaternary structure, homodimer.

The catalysed reaction is shikimate + NADP(+) = 3-dehydroshikimate + NADPH + H(+). Its pathway is metabolic intermediate biosynthesis; chorismate biosynthesis; chorismate from D-erythrose 4-phosphate and phosphoenolpyruvate: step 4/7. Involved in the biosynthesis of the chorismate, which leads to the biosynthesis of aromatic amino acids. Catalyzes the reversible NADPH linked reduction of 3-dehydroshikimate (DHSA) to yield shikimate (SA). The sequence is that of Shikimate dehydrogenase (NADP(+)) from Shigella boydii serotype 4 (strain Sb227).